We begin with the raw amino-acid sequence, 267 residues long: Glucosamine-6-phosphate deaminase (267 aa).

Aspartate 76 acts as the Proton acceptor; for enolization step in catalysis. Aspartate 145 serves as the catalytic For ring-opening step. Catalysis depends on histidine 147, which acts as the Proton acceptor; for ring-opening step. The active-site For ring-opening step is glutamate 152.

Belongs to the glucosamine/galactosamine-6-phosphate isomerase family. As to quaternary structure, homohexamer.

The protein localises to the cytoplasm. It carries out the reaction alpha-D-glucosamine 6-phosphate + H2O = beta-D-fructose 6-phosphate + NH4(+). It participates in nucleotide-sugar biosynthesis; UDP-N-acetyl-alpha-D-glucosamine biosynthesis; alpha-D-glucosamine 6-phosphate from D-fructose 6-phosphate: step 1/1. Its function is as follows. Catalyzes the reversible conversion of alpha-D-glucosamine 6-phosphate (GlcN-6P) into beta-D-fructose 6-phosphate (Fru-6P) and ammonium ion, a regulatory reaction step in de novo uridine diphosphate-N-acetyl-alpha-D-glucosamine (UDP-GlcNAc) biosynthesis via hexosamine pathway. The chain is Glucosamine-6-phosphate deaminase from Dictyostelium discoideum (Social amoeba).